The chain runs to 458 residues: BPI fold-containing family B member 2 (458 aa).

A signal peptide spans 1 to 20 (MAWASRLGLLLALLLPVVGA). T52 is subject to Phosphothreonine; by FAM20C. S60 is subject to Phosphoserine; by FAM20C. N96, N151, N293, and N332 each carry an N-linked (GlcNAc...) asparagine glycan. A disulfide bridge connects residues C137 and C174.

This sequence belongs to the BPI/LBP/Plunc superfamily. BPI/LBP family. As to expression, highly expressed in tonsils, especially in hypertrophic tonsils. Detected at very low levels in fetal liver.

It is found in the secreted. This chain is BPI fold-containing family B member 2 (BPIFB2), found in Homo sapiens (Human).